The sequence spans 565 residues: Augmin complex subunit dgt3 (565 aa).

2 coiled-coil regions span residues 135 to 171 (ELQL…AKKA) and 212 to 241 (QDYD…IQFY).

The protein belongs to the HAUS3 family. In terms of assembly, component of the augmin complex composed of dgt2, dgt3, dgt4, dgt5, dgt6, msd1, msd5 and wac. The complex interacts directly or indirectly with microtubules and is required for centrosome-independent generation of spindle microtubules.

It is found in the cytoplasm. It localises to the cytoskeleton. Its subcellular location is the spindle. Its function is as follows. As part of the augmin complex, plays a role in centrosome-independent generation of spindle microtubules. The complex is required for mitotic spindle assembly through its involvement in localizing gamma-tubulin to spindle microtubules. The chain is Augmin complex subunit dgt3 from Drosophila melanogaster (Fruit fly).